The chain runs to 124 residues: Small ribosomal subunit protein uS12 (124 aa).

Asp89 is subject to 3-methylthioaspartic acid. Residues 105 to 124 are disordered; the sequence is TGVDSRMQGRSKYGTKKPKK.

Belongs to the universal ribosomal protein uS12 family. Part of the 30S ribosomal subunit. Contacts proteins S8 and S17. May interact with IF1 in the 30S initiation complex.

In terms of biological role, with S4 and S5 plays an important role in translational accuracy. Functionally, interacts with and stabilizes bases of the 16S rRNA that are involved in tRNA selection in the A site and with the mRNA backbone. Located at the interface of the 30S and 50S subunits, it traverses the body of the 30S subunit contacting proteins on the other side and probably holding the rRNA structure together. The combined cluster of proteins S8, S12 and S17 appears to hold together the shoulder and platform of the 30S subunit. The chain is Small ribosomal subunit protein uS12 from Vesicomyosocius okutanii subsp. Calyptogena okutanii (strain HA).